A 238-amino-acid polypeptide reads, in one-letter code: Large ribosomal subunit protein uL2 (238 aa).

Residues His-198–Ala-238 form a disordered region. Polar residues predominate over residues Gln-206–Arg-216. Basic residues predominate over residues Lys-223–Ala-238.

The protein belongs to the universal ribosomal protein uL2 family. In terms of assembly, part of the 50S ribosomal subunit. Forms a bridge to the 30S subunit in the 70S ribosome.

One of the primary rRNA binding proteins. Required for association of the 30S and 50S subunits to form the 70S ribosome, for tRNA binding and peptide bond formation. It has been suggested to have peptidyltransferase activity; this is somewhat controversial. Makes several contacts with the 16S rRNA in the 70S ribosome. This chain is Large ribosomal subunit protein uL2, found in Sulfolobus acidocaldarius (strain ATCC 33909 / DSM 639 / JCM 8929 / NBRC 15157 / NCIMB 11770).